Consider the following 705-residue polypeptide: Polyribonucleotide nucleotidyltransferase (705 aa).

Positions 486 and 492 each coordinate Mg(2+). Residues 553-612 enclose the KH domain; the sequence is PRIIKFKINPEKIRDVIGKGGAVIRALTEETGTTIDISDDGSVTIASISNEGGEQAKRRI. An S1 motif domain is found at 622 to 690; sequence GKIYEGTVLK…DKGRLRLSMK (69 aa).

Belongs to the polyribonucleotide nucleotidyltransferase family. Mg(2+) serves as cofactor.

The protein resides in the cytoplasm. It catalyses the reaction RNA(n+1) + phosphate = RNA(n) + a ribonucleoside 5'-diphosphate. Functionally, involved in mRNA degradation. Catalyzes the phosphorolysis of single-stranded polyribonucleotides processively in the 3'- to 5'-direction. The chain is Polyribonucleotide nucleotidyltransferase from Nitrosomonas eutropha (strain DSM 101675 / C91 / Nm57).